Reading from the N-terminus, the 141-residue chain is VLSPGDKSNIKAAWGKIGGQAPQYGAEALERMFLSFPTTKTYFPHFDMSHGSAQIQAHGKKVADALSTAVGHLDDLPTALSALSDLHAHKLRVDPANFKLLSHCILVTLACHHPGDFTPEIHASLDKFLANVSTVLTSKYR.

The Globin domain maps to 1–141 (VLSPGDKSNI…VSTVLTSKYR (141 aa)). Serine 3 carries the phosphoserine modification. An N6-succinyllysine mark is found at lysine 7 and lysine 11. Lysine 16 is subject to N6-acetyllysine; alternate. Lysine 16 is subject to N6-succinyllysine; alternate. Phosphotyrosine is present on tyrosine 24. The residue at position 35 (serine 35) is a Phosphoserine. Lysine 40 is subject to N6-succinyllysine. The residue at position 49 (serine 49) is a Phosphoserine. Position 58 (histidine 58) interacts with O2. Histidine 87 contacts heme b. Position 102 is a phosphoserine (serine 102). The residue at position 108 (threonine 108) is a Phosphothreonine. Serine 124 carries the post-translational modification Phosphoserine. A phosphothreonine mark is found at threonine 134 and threonine 137. Serine 138 bears the Phosphoserine mark.

It belongs to the globin family. In terms of assembly, heterotetramer of two alpha chains and two beta chains. As to expression, red blood cells.

Its function is as follows. Involved in oxygen transport from the lung to the various peripheral tissues. Functionally, hemopressin acts as an antagonist peptide of the cannabinoid receptor CNR1. Hemopressin-binding efficiently blocks cannabinoid receptor CNR1 and subsequent signaling. This chain is Hemoglobin subunit alpha (HBA), found in Tupaia glis (Common tree shrew).